Here is a 685-residue protein sequence, read N- to C-terminus: Serotransferrin (685 aa).

Residues 1–16 form the signal peptide; it reads MKPLLLLPLLGCLATI. 2 Transferrin-like domains span residues 23 to 329 and 340 to 666; these read VKWC…ALKI and MKWC…SLRT. A disulfide bridge links cysteine 26 with cysteine 48. Residues aspartate 72 and tyrosine 102 each contribute to the Fe(3+) site. 3 disulfides stabilise this stretch: cysteine 125–cysteine 206, cysteine 170–cysteine 184, and cysteine 234–cysteine 248. The hydrogencarbonate site is built by threonine 127, lysine 131, alanine 133, and glycine 134. Residue tyrosine 200 participates in Fe(3+) binding. Histidine 256 contributes to the Fe(3+) binding site. 2 disulfides stabilise this stretch: cysteine 343–cysteine 379 and cysteine 353–cysteine 370. 2 residues coordinate Fe(3+): aspartate 394 and tyrosine 428. Intrachain disulfides connect cysteine 404/cysteine 678, cysteine 419/cysteine 639, cysteine 451/cysteine 526, cysteine 475/cysteine 667, cysteine 485/cysteine 499, cysteine 496/cysteine 509, and cysteine 566/cysteine 580. Hydrogencarbonate contacts are provided by threonine 453, arginine 457, alanine 459, and glycine 460. Residue asparagine 476 is glycosylated (N-linked (GlcNAc...) asparagine). Position 520 (tyrosine 520) interacts with Fe(3+). Histidine 588 lines the Fe(3+) pocket.

It belongs to the transferrin family. Monomer.

Its subcellular location is the secreted. Transferrins are iron binding transport proteins which can bind two Fe(3+) ions in association with the binding of an anion, usually bicarbonate. This chain is Serotransferrin (tf), found in Paralichthys olivaceus (Bastard halibut).